The following is a 194-amino-acid chain: PLASMODESMATA CALLOSE-BINDING PROTEIN 2 (194 aa).

The N-terminal stretch at 1 to 16 is a signal peptide; sequence MAPLVLYLLTLLMAGH. Cysteines 22 and 84 form a disulfide. A glycan (N-linked (GlcNAc...) asparagine) is linked at asparagine 85. Residues 106–116 show a composition bias toward low complexity; the sequence is SSASGSSGSGS. The interval 106-140 is disordered; sequence SSASGSSGSGSTTVTPGKNSPKGSNSITTFPGGNS. Residues 117-140 are compositionally biased toward polar residues; that stretch reads TTVTPGKNSPKGSNSITTFPGGNS. N-linked (GlcNAc...) asparagine glycosylation is present at asparagine 154. Serine 171 is lipidated: GPI-anchor amidated serine. Residues 172-194 constitute a propeptide, removed in mature form; the sequence is SGFALYYSNNLLLTGFCSLVMML.

Post-translationally, contains two additional disulfide bonds. As to expression, expressed in the shoot apical region and in young leaves but also detected in the laminar and vasculature of mature leaves.

It localises to the cell membrane. It is found in the cell junction. The protein localises to the plasmodesma. Functionally, able to bind (1-&gt;3)-beta-D-glucans (laminarin). This chain is PLASMODESMATA CALLOSE-BINDING PROTEIN 2 (PDCB2), found in Arabidopsis thaliana (Mouse-ear cress).